The following is a 164-amino-acid chain: Transmembrane protein B169L (164 aa).

Transmembrane regions (helical) follow at residues 28–48 and 60–80; these read NPFIVALIITAVVLVVFFAIC and TAIYIYICIVALLFLHYYVLN. An N-linked (GlcNAc...) asparagine; by host glycan is attached at N88. Positions 114–142 are disordered; sequence SPPSVPDELEEDRPKMIPAGSKPADFKPA.

It belongs to the asfivirus B169L family.

The protein resides in the host membrane. It is found in the virion. The protein is Transmembrane protein B169L of Ornithodoros (relapsing fever ticks).